A 308-amino-acid polypeptide reads, in one-letter code: Mitochondrial import receptor subunit TOM40B (308 aa).

Residues 281–308 are required for mitochondrial targeting; that stretch reads PLPVTLALGAFLNHWRNRFHCGFSITVG.

Belongs to the Tom40 family. In terms of assembly, forms part of the preprotein translocase of the outer mitochondrial membrane (TOM complex) containing TOMM22, TOMM40, TOMM40L and TOMM70. Interacts with mitochondrial targeting sequences. As to expression, widely expressed. Higher levels in heart, brain and liver, very low level in testis.

The protein resides in the mitochondrion outer membrane. In terms of biological role, potential channel-forming protein implicated in import of protein precursors into mitochondria. The sequence is that of Mitochondrial import receptor subunit TOM40B from Rattus norvegicus (Rat).